Here is a 481-residue protein sequence, read N- to C-terminus: tRNA-2-methylthio-N(6)-dimethylallyladenosine synthase (481 aa).

The region spanning 24-140 (RKLFIESYGC…LPNLINEVEE (117 aa)) is the MTTase N-terminal domain. C33, C69, C103, C178, C182, and C185 together coordinate [4Fe-4S] cluster. The region spanning 164–410 (QSNGVSAFVS…VDLQQKHSKQ (247 aa)) is the Radical SAM core domain. The TRAM domain maps to 413 to 476 (NSVIGTTVEV…SATLIGEPIG (64 aa)).

The protein belongs to the methylthiotransferase family. MiaB subfamily. In terms of assembly, monomer. [4Fe-4S] cluster is required as a cofactor.

It is found in the cytoplasm. It catalyses the reaction N(6)-dimethylallyladenosine(37) in tRNA + (sulfur carrier)-SH + AH2 + 2 S-adenosyl-L-methionine = 2-methylsulfanyl-N(6)-dimethylallyladenosine(37) in tRNA + (sulfur carrier)-H + 5'-deoxyadenosine + L-methionine + A + S-adenosyl-L-homocysteine + 2 H(+). Catalyzes the methylthiolation of N6-(dimethylallyl)adenosine (i(6)A), leading to the formation of 2-methylthio-N6-(dimethylallyl)adenosine (ms(2)i(6)A) at position 37 in tRNAs that read codons beginning with uridine. The chain is tRNA-2-methylthio-N(6)-dimethylallyladenosine synthase from Christiangramia forsetii (strain DSM 17595 / CGMCC 1.15422 / KT0803) (Gramella forsetii).